A 369-amino-acid chain; its full sequence is MSALGESRTRLCDQFAFVSGSDSAVAQCYLAENEWDMERALNSFFEAHMDSVFDEEAEKTEVTGNKRKDDTAEASGTKKKLKTDNADCIDLTAEEPTCSITVNSKENQAENGTAKSEVEDSKLSIISWNVDGLDTLNLADRARGLCSYLALYTPDVVFLQELIPAYVQYLKKRAVSYLFFEGSDDGYFTGIMLRKSRVKFLESEIICFPTTQMMRNLLIAQVTFSGQKLYLMTSHLESCKNQSQERTKQLRVVLQKIKEAPEDAIVIFAGDTNLRDAEVANVGGLPAGVCDVWEQLGKQEHCRYTWDTKANSNKTVPYVSRCRFDRIFLRSAKTAPPVTPDHMALIGMEKLDCGRYTSDHWGIYCTFNT.

The segment at 58–77 (EKTEVTGNKRKDDTAEASGT) is disordered. A compositionally biased stretch (basic and acidic residues) spans 59–71 (KTEVTGNKRKDDT). The interaction with 5' end of substrate DNA stretch occupies residues 129–133 (NVDGL). Asp131 and Glu161 together coordinate Mg(2+). The tract at residues 235-240 (HLESCK) is interaction with 5' end of substrate DNA. Asp271 functions as the Proton donor/acceptor in the catalytic mechanism. An interaction with 5' end of substrate DNA region spans residues 273-275 (NLR).

It belongs to the CCR4/nocturin family. TTRAP/TDP2 subfamily. Requires Mg(2+) as cofactor. Mn(2+) is required as a cofactor. As to expression, expressed ubiquitously during blastula stages and throughout gastrulation. Shortly after shield formation, expressed weakly in dorsal forerunner cells (DFCs). Between somite stages 5 and 9, expressed in the tailbud and around the Kupffer's vesicle at a higher level than the more uniform expression in the embryo.

It localises to the nucleus. Its subcellular location is the PML body. Its function is as follows. DNA repair enzyme that can remove a variety of covalent adducts from DNA through hydrolysis of a 5'-phosphodiester bond, giving rise to DNA with a free 5' phosphate. Catalyzes the hydrolysis of dead-end complexes between DNA and the topoisomerase 2 (top2) active site tyrosine residue. Hydrolyzes 5'-phosphoglycolates on protruding 5' ends on DNA double-strand breaks (DSBs) due to DNA damage by radiation and free radicals. Controls gastrulation movements and left/right (L/R) axis determination via smad3-mediated regulation of cdh1/e-cadherin. Regulates the formation of Kupffer's vesicle, a signaling center essential for establishing L/R asymmetry. Modulates smad3 activity through modulating nodal-acvr1/akt4 signaling. The sequence is that of Tyrosyl-DNA phosphodiesterase 2 (tdp2) from Danio rerio (Zebrafish).